A 295-amino-acid chain; its full sequence is Foldase protein PrsA (295 aa).

The signal sequence occupies residues 1 to 19; it reads MKKVLIGFASIAMAFTLAA. Cysteine 20 carries the N-palmitoyl cysteine lipid modification. Cysteine 20 carries the S-diacylglycerol cysteine lipid modification. Residues 136 to 229 enclose the PpiC domain; the sequence is EPKVTVAQIL…YGYQVIKMIN (94 aa).

This sequence belongs to the PrsA family.

The protein localises to the cell membrane. It catalyses the reaction [protein]-peptidylproline (omega=180) = [protein]-peptidylproline (omega=0). In terms of biological role, plays a major role in protein secretion by helping the post-translocational extracellular folding of several secreted proteins. The polypeptide is Foldase protein PrsA (Pediococcus pentosaceus (strain ATCC 25745 / CCUG 21536 / LMG 10740 / 183-1w)).